A 447-amino-acid polypeptide reads, in one-letter code: Ribosomal protein uS12 methylthiotransferase RimO (447 aa).

The 111-residue stretch at 4 to 114 folds into the MTTase N-terminal domain; the sequence is PKVGFVSLGC…VMEAVHEYVP (111 aa). Residues cysteine 13, cysteine 49, cysteine 78, cysteine 147, cysteine 151, and cysteine 154 each contribute to the [4Fe-4S] cluster site. Residues 133–370 form the Radical SAM core domain; that stretch reads LTPKHYAYLK…MQVQQQISAA (238 aa). The TRAM domain occupies 373 to 443; that stretch reads QKRIGQTMTV…EYDLFAKLIK (71 aa).

Belongs to the methylthiotransferase family. RimO subfamily. The cofactor is [4Fe-4S] cluster.

The protein resides in the cytoplasm. The enzyme catalyses L-aspartate(89)-[ribosomal protein uS12]-hydrogen + (sulfur carrier)-SH + AH2 + 2 S-adenosyl-L-methionine = 3-methylsulfanyl-L-aspartate(89)-[ribosomal protein uS12]-hydrogen + (sulfur carrier)-H + 5'-deoxyadenosine + L-methionine + A + S-adenosyl-L-homocysteine + 2 H(+). Its function is as follows. Catalyzes the methylthiolation of an aspartic acid residue of ribosomal protein uS12. The protein is Ribosomal protein uS12 methylthiotransferase RimO of Acinetobacter baumannii (strain AB0057).